A 137-amino-acid polypeptide reads, in one-letter code: Putative nickel-responsive regulator (137 aa).

Residues histidine 78, histidine 89, histidine 91, and cysteine 97 each coordinate Ni(2+).

This sequence belongs to the transcriptional regulatory CopG/NikR family. It depends on Ni(2+) as a cofactor.

In terms of biological role, transcriptional regulator. In Syntrophus aciditrophicus (strain SB), this protein is Putative nickel-responsive regulator.